Reading from the N-terminus, the 226-residue chain is MKSIKLIAFDLDGTLLDSVPDLAVAADQAARAVGYPAVSEAQVRDYVGNGADVLIARALSQSLTINPELSPELRAQARHLFDEFYEQTGHKLSHLYPNVKTTLLELHQAGFILALVTNKPSKFVPDVLEQHGIAHFFSDVIGGDTFPNKKPDPMALNWLLEKHQLSAEQMLMVGDSKNDILAAKNAGCYSFGLTYGYNHGEPIANAEPDFVSDDIGTLLEVVLVSA.

Catalysis depends on Asp10, which acts as the Nucleophile. Mg(2+) contacts are provided by Asp10, Asp12, and Asp175.

Belongs to the HAD-like hydrolase superfamily. CbbY/CbbZ/Gph/YieH family. Mg(2+) serves as cofactor.

It carries out the reaction 2-phosphoglycolate + H2O = glycolate + phosphate. The protein operates within organic acid metabolism; glycolate biosynthesis; glycolate from 2-phosphoglycolate: step 1/1. Its function is as follows. Specifically catalyzes the dephosphorylation of 2-phosphoglycolate. Is involved in the dissimilation of the intracellular 2-phosphoglycolate formed during the DNA repair of 3'-phosphoglycolate ends, a major class of DNA lesions induced by oxidative stress. This Vibrio cholerae serotype O1 (strain ATCC 39315 / El Tor Inaba N16961) protein is Phosphoglycolate phosphatase.